A 161-amino-acid polypeptide reads, in one-letter code: uncharacterized protein (161 aa).

This is an uncharacterized protein from Methanocaldococcus jannaschii (strain ATCC 43067 / DSM 2661 / JAL-1 / JCM 10045 / NBRC 100440) (Methanococcus jannaschii).